We begin with the raw amino-acid sequence, 578 residues long: Putative transporter B0361.11 (578 aa).

Residues 1-30 are disordered; the sequence is MSISRRSYEQFDEMKSENQENNSKKKSSER. The next 11 membrane-spanning stretches (helical) occupy residues 51 to 71, 148 to 168, 182 to 202, 232 to 252, 263 to 283, 339 to 359, 373 to 393, 399 to 419, 426 to 446, 457 to 477, and 486 to 506; these read IFTY…MYIM, FGLT…SMLA, ILAF…IFLI, AWIT…TLLV, YFIV…LPES, IWLL…YFAI, AFLY…PLMM, MIVI…TVFL, LVIM…HPIW, SLCF…SPYV, and WIPF…AFML. The span at 532 to 550 shows a compositional bias: low complexity; the sequence is AYRRSKSSSSSVSALSKTS. The tract at residues 532–561 is disordered; that stretch reads AYRRSKSSSSSVSALSKTSVRSKKTLSSES.

Belongs to the major facilitator superfamily. Sugar transporter (TC 2.A.1.1) family.

It is found in the membrane. This chain is Putative transporter B0361.11, found in Caenorhabditis elegans.